The primary structure comprises 206 residues: MRMLWRSLALCGLALTLAPCAQAAEPIEGKTVYIDAGHGGEDSGAVGNGLFEKDINLAVSEHVTDKLKEEGANPVASRSDDHFLTLEERVAKASANQADLFVSIHVNSGVASASGTETYFQSDYEGENSRRLASDIQSQLVSSLQTRDRGVKESDFYVITYSQMPSVLAELGFITNSSDADKLGSEEYQQKAADAIVNGIDSYYDQ.

Residues 32–201 (VYIDAGHGGE…AADAIVNGID (170 aa)) enclose the MurNAc-LAA domain.

The protein belongs to the N-acetylmuramoyl-L-alanine amidase 3 family.

This is an uncharacterized protein from Bacillus subtilis (strain 168).